A 539-amino-acid polypeptide reads, in one-letter code: F-box only protein 31 (539 aa).

The disordered stretch occupies residues 11–53 (GPSRGCRRRQQRRGPAETAAADSEPDTDPEEERIEASAGVGGG). At S33 the chain carries Phosphoserine. S33 is modified (phosphoserine; by PKB/AKT1). Residues 33–43 (SEPDTDPEEER) are compositionally biased toward acidic residues. A Phosphothreonine modification is found at T37. A D box motif is present at residues 64–69 (RCSLLE). An F-box domain is found at 64 to 110 (RCSLLELPPELLVEIFASLPGTDLPSLAQVCTKFRRILHTDTIWRRR). Positions 206, 214, 230, and 236 each coordinate Zn(2+). Residue S278 is modified to Phosphoserine; by ATM. The DDL motif signature appears at 297 to 299 (DDL). Residues 377–397 (VRQEQQEGGHEAGEGRGRQGP) show a composition bias toward basic and acidic residues. The tract at residues 377-446 (VRQEQQEGGH…PAQCGQGQPF (70 aa)) is disordered. At T419 the chain carries Phosphothreonine; by MTOR. S480 carries the phosphoserine modification.

This sequence belongs to the FBXO31 family. As to quaternary structure, part of a SCF (SKP1-cullin-F-box) protein ligase complex SCF(FBXO31) composed of CUL1, SKP1, RBX1 and FBXO31. Interacts (when phosphorylated at Ser-33) with CDC20, promoting ubiquitination by the APC/C complex. Phosphorylation at Ser-278 by ATM following gamma-irradiation results in its stabilization. Phosphorylation at Thr-419 and Ser-480 in absence of stress promotes its ubiquitination and degradation by the SCF(FBXO46) complex. Phosphorylation at Ser-33 by AKT1 promotes association with CDC20 and ubiquitination by the APC/C complex. Post-translationally, ubiquitinated by the SCF(FBXO46) complex in absence of stress, promoting its degradation. Ubiquitinated by the APC/C complex following phosphorylation at Ser-33, leading to its degradation by the proteasome. As to expression, highly expressed in brain. Expressed at moderate levels in most tissues, except bone marrow.

The protein localises to the cytoplasm. Its subcellular location is the cytoskeleton. It localises to the microtubule organizing center. The protein resides in the centrosome. Its pathway is protein modification; protein ubiquitination. Functionally, substrate-recognition component of the SCF(FBXO31) protein ligase complex, which specifically mediates the ubiquitination of proteins amidated at their C-terminus in response to oxidative stress, leading to their degradation by the proteasome. FBXO31 specifically recognizes and binds C-terminal peptides bearing an amide: C-terminal amidation in response to oxidative stress takes place following protein fragmentation. The SCF(FBXO31) also plays a role in G1 arrest following DNA damage by mediating ubiquitination of phosphorylated cyclin-D1 (CCND1), promoting its degradation by the proteasome, resulting in G1 arrest. The SCF(FBXO31) complex is however not a major regulator of CCND1 stability during the G1/S transition. In response to genotoxic stress, the SCF(FBXO31) complex directs ubiquitination and degradation of phosphorylated MDM2, thereby promoting p53/TP53-mediated DNA damage response. SCF(FBXO31) complex is required for genomic integrity by catalyzing ubiquitination and degradation of cyclin-A (CCNA1 and/or CCNA2) during the G1 phase. In response to genotoxic stress, the SCF(FBXO31) complex directs ubiquitination and degradation of phosphorylated FBXO46 and MAP2K6. SCF(FBXO31) complex promotes ubiquitination and degradation of CDT1 during the G2 phase to prevent re-replication. The SCF(FBXO31) complex also mediates ubiquitination and degradation of DUSP6, OGT and PARD6A. This is F-box only protein 31 from Homo sapiens (Human).